A 144-amino-acid polypeptide reads, in one-letter code: Neuritin-A (144 aa).

An N-terminal signal peptide occupies residues 1 to 27 (MGLKLSGRYIFLVLAVHLAYLLQAVKA). Serine 114 carries the GPI-anchor amidated serine lipid modification. The propeptide at 115-144 (AGAPGQRLLFPAFLPLLMVFLSTLFILVLQ) is removed in mature form.

This sequence belongs to the neuritin family. Expressed in sensory regions of the brain including the visual, auditory and olfactory systems. Within the retina, only expressed in the retinal ganglion cells. Concentrated in axon tracts including retinal axons.

The protein resides in the cell membrane. Functionally, modulates postsynaptic dendritic arbor elaboration and synaptic maturation. This chain is Neuritin-A (nrn1-a), found in Xenopus laevis (African clawed frog).